The chain runs to 318 residues: Aspartate carbamoyltransferase catalytic subunit (318 aa).

Positions 59 and 60 each coordinate carbamoyl phosphate. Position 87 (Lys87) interacts with L-aspartate. The carbamoyl phosphate site is built by Arg109, His137, and Gln140. 2 residues coordinate L-aspartate: Arg170 and Arg224. Carbamoyl phosphate contacts are provided by Gly265 and Pro266.

It belongs to the aspartate/ornithine carbamoyltransferase superfamily. ATCase family. Heterododecamer (2C3:3R2) of six catalytic PyrB chains organized as two trimers (C3), and six regulatory PyrI chains organized as three dimers (R2).

The catalysed reaction is carbamoyl phosphate + L-aspartate = N-carbamoyl-L-aspartate + phosphate + H(+). The protein operates within pyrimidine metabolism; UMP biosynthesis via de novo pathway; (S)-dihydroorotate from bicarbonate: step 2/3. Catalyzes the condensation of carbamoyl phosphate and aspartate to form carbamoyl aspartate and inorganic phosphate, the committed step in the de novo pyrimidine nucleotide biosynthesis pathway. This is Aspartate carbamoyltransferase catalytic subunit from Rhizobium etli (strain ATCC 51251 / DSM 11541 / JCM 21823 / NBRC 15573 / CFN 42).